We begin with the raw amino-acid sequence, 659 residues long: Interferon-induced GTP-binding protein Mx1 (659 aa).

Met1 is modified (N-acetylmethionine). The disordered stretch occupies residues 1-40 (MVNSKGEITDSDPGSNHLLLNGLPDKAGKNQDTEPENSLC). The Dynamin-type G domain occupies 65-338 (DLALPAIAVI…LITHICKTLP (274 aa)). The G1 motif stretch occupies residues 75–82 (GDQSSGKS). 75-82 (GDQSSGKS) is a GTP binding site. The segment at 100 to 102 (VTR) is G2 motif. Residues 176 to 179 (DLPG) form a G3 motif region. Residues 176 to 180 (DLPGI) and 245 to 248 (TKPD) contribute to the GTP site. A G4 motif region spans residues 245–248 (TKPD). The G5 motif stretch occupies residues 277–280 (KCRG). Residues 339–364 (LLENQIKENHEKITEELKKYGSDVPE) are bundle signaling element (BSE). The middle domain stretch occupies residues 364–531 (EEEHEKMFFL…HFQMEQIVYC (168 aa)). The segment at 365–629 (EEHEKMFFLI…KDTYNWLLKE (265 aa)) is stalk. Residues 552–555 (KNKK) are critical for lipid-binding. Residues 571-659 (LSEIFEHLLA…ARRRLAKFPG (89 aa)) enclose the GED domain.

It belongs to the TRAFAC class dynamin-like GTPase superfamily. Dynamin/Fzo/YdjA family. As to quaternary structure, homooligomer. Oligomerizes into multimeric filamentous or ring-like structures by virtue of its stalk domain. Oligomerization is critical for GTPase activity, protein stability, and recognition of viral target structures. Interacts with TRPC1, TRPC3, TRPC4, TRPC5, TRPC6 and TRPC7. Interacts with HSPA5. Interacts with TUBB/TUBB5. Interacts with DDX39A and DDX39B. ISGylated.

Its subcellular location is the cytoplasm. It is found in the endoplasmic reticulum membrane. The protein localises to the perinuclear region. Functionally, interferon-induced dynamin-like GTPase with antiviral activity. In Phoca vitulina (Harbor seal), this protein is Interferon-induced GTP-binding protein Mx1 (MX1).